Here is a 472-residue protein sequence, read N- to C-terminus: Cell division protein FtsP (472 aa).

The tat-type signal signal peptide spans 1-27; sequence MSLSRRQFIQASGIALCAGAMPLTARA.

The protein belongs to the FtsP family. Post-translationally, predicted to be exported by the Tat system. The position of the signal peptide cleavage has not been experimentally proven.

The protein resides in the periplasm. Functionally, cell division protein that is required for growth during stress conditions. May be involved in protecting or stabilizing the divisomal assembly under conditions of stress. This is Cell division protein FtsP from Dickeya dadantii (strain 3937) (Erwinia chrysanthemi (strain 3937)).